A 301-amino-acid polypeptide reads, in one-letter code: Methionyl-tRNA formyltransferase (301 aa).

109-112 (SLLP) contacts (6S)-5,6,7,8-tetrahydrofolate.

This sequence belongs to the Fmt family.

It catalyses the reaction L-methionyl-tRNA(fMet) + (6R)-10-formyltetrahydrofolate = N-formyl-L-methionyl-tRNA(fMet) + (6S)-5,6,7,8-tetrahydrofolate + H(+). In terms of biological role, attaches a formyl group to the free amino group of methionyl-tRNA(fMet). The formyl group appears to play a dual role in the initiator identity of N-formylmethionyl-tRNA by promoting its recognition by IF2 and preventing the misappropriation of this tRNA by the elongation apparatus. In Ruegeria pomeroyi (strain ATCC 700808 / DSM 15171 / DSS-3) (Silicibacter pomeroyi), this protein is Methionyl-tRNA formyltransferase.